A 99-amino-acid polypeptide reads, in one-letter code: Integration host factor subunit alpha (99 aa).

This sequence belongs to the bacterial histone-like protein family. In terms of assembly, heterodimer of an alpha and a beta chain.

In terms of biological role, this protein is one of the two subunits of integration host factor, a specific DNA-binding protein that functions in genetic recombination as well as in transcriptional and translational control. The protein is Integration host factor subunit alpha of Thioalkalivibrio sulfidiphilus (strain HL-EbGR7).